Reading from the N-terminus, the 313-residue chain is BTB/POZ domain-containing adapter for CUL3-mediated RhoA degradation protein 3 (313 aa).

N-acetylmethionine is present on Met1. Ser23 is subject to Phosphoserine. Residues 32 to 100 enclose the BTB domain; sequence KYVKLNVGGA…LRDGAVPLPE (69 aa). The PCNA-binding motif lies at 239–245; sequence QTKVEFP.

Belongs to the BACURD family. As to quaternary structure, homotetramer; forms a two-fold symmetric tetramer in solution. Interacts with CUL3; interaction is direct and forms a 5:5 heterodecamer. Component of the BCR(BACURD3) E3 ubiquitin ligase complex, at least composed of CUL3, KCTD10/BACURD3 and RBX1. Interacts with DNA polymerase delta subunit 2/POLD2. Interacts with PCNA.

Its subcellular location is the nucleus. It functions in the pathway protein modification; protein ubiquitination. Its function is as follows. Substrate-specific adapter of a BCR (BTB-CUL3-RBX1) E3 ubiquitin-protein ligase complex. The BCR(BACURD3) E3 ubiquitin ligase complex mediates the ubiquitination of target proteins, leading to their degradation by the proteasome. This is BTB/POZ domain-containing adapter for CUL3-mediated RhoA degradation protein 3 (KCTD10) from Homo sapiens (Human).